The following is a 225-amino-acid chain: Biosynthetic peptidoglycan transglycosylase (225 aa).

The helical transmembrane segment at 9–29 threads the bilayer; that stretch reads LLIFIGAILLIQLWIFSSLVW.

It belongs to the glycosyltransferase 51 family.

The protein resides in the cell inner membrane. It catalyses the reaction [GlcNAc-(1-&gt;4)-Mur2Ac(oyl-L-Ala-gamma-D-Glu-L-Lys-D-Ala-D-Ala)](n)-di-trans,octa-cis-undecaprenyl diphosphate + beta-D-GlcNAc-(1-&gt;4)-Mur2Ac(oyl-L-Ala-gamma-D-Glu-L-Lys-D-Ala-D-Ala)-di-trans,octa-cis-undecaprenyl diphosphate = [GlcNAc-(1-&gt;4)-Mur2Ac(oyl-L-Ala-gamma-D-Glu-L-Lys-D-Ala-D-Ala)](n+1)-di-trans,octa-cis-undecaprenyl diphosphate + di-trans,octa-cis-undecaprenyl diphosphate + H(+). It participates in cell wall biogenesis; peptidoglycan biosynthesis. Functionally, peptidoglycan polymerase that catalyzes glycan chain elongation from lipid-linked precursors. This is Biosynthetic peptidoglycan transglycosylase from Acinetobacter baumannii (strain SDF).